We begin with the raw amino-acid sequence, 79 residues long: UPF0349 protein BCE33L4669 (79 aa).

It belongs to the UPF0349 family.

The protein is UPF0349 protein BCE33L4669 of Bacillus cereus (strain ZK / E33L).